The primary structure comprises 102 residues: Urease subunit beta (102 aa).

It belongs to the urease beta subunit family. In terms of assembly, heterotrimer of UreA (gamma), UreB (beta) and UreC (alpha) subunits. Three heterotrimers associate to form the active enzyme.

The protein localises to the cytoplasm. The catalysed reaction is urea + 2 H2O + H(+) = hydrogencarbonate + 2 NH4(+). The protein operates within nitrogen metabolism; urea degradation; CO(2) and NH(3) from urea (urease route): step 1/1. The polypeptide is Urease subunit beta (Alteromonas mediterranea (strain DSM 17117 / CIP 110805 / LMG 28347 / Deep ecotype)).